A 264-amino-acid chain; its full sequence is Ribosomal RNA small subunit methyltransferase A (264 aa).

The S-adenosyl-L-methionine site is built by Asn-12, Leu-14, Gly-40, Glu-61, Asp-86, and Asn-105.

Belongs to the class I-like SAM-binding methyltransferase superfamily. rRNA adenine N(6)-methyltransferase family. RsmA subfamily.

Its subcellular location is the cytoplasm. The catalysed reaction is adenosine(1518)/adenosine(1519) in 16S rRNA + 4 S-adenosyl-L-methionine = N(6)-dimethyladenosine(1518)/N(6)-dimethyladenosine(1519) in 16S rRNA + 4 S-adenosyl-L-homocysteine + 4 H(+). Its function is as follows. Specifically dimethylates two adjacent adenosines (A1518 and A1519) in the loop of a conserved hairpin near the 3'-end of 16S rRNA in the 30S particle. May play a critical role in biogenesis of 30S subunits. The polypeptide is Ribosomal RNA small subunit methyltransferase A (Fusobacterium nucleatum subsp. nucleatum (strain ATCC 25586 / DSM 15643 / BCRC 10681 / CIP 101130 / JCM 8532 / KCTC 2640 / LMG 13131 / VPI 4355)).